Consider the following 122-residue polypeptide: UPF0344 protein BcerKBAB4_1054 (122 aa).

Transmembrane regions (helical) follow at residues 6–26, 38–58, 65–85, and 92–112; these read ITAW…YSAG, LMYI…VKTA, WYGM…MVLV, and PTGA…YLGL.

Belongs to the UPF0344 family.

It is found in the cell membrane. In Bacillus mycoides (strain KBAB4) (Bacillus weihenstephanensis), this protein is UPF0344 protein BcerKBAB4_1054.